The sequence spans 485 residues: NADH-quinone oxidoreductase subunit N (485 aa).

Helical transmembrane passes span 8-28 (LIAL…MLSI), 35-55 (FLNA…LWFV), 71-91 (GFAM…CTFA), 105-125 (FYLL…ANHL), 127-147 (ALFL…GYAF), 159-179 (YTIL…LVYA), 203-223 (LLAG…LAPF), 235-255 (PAPV…GVVM), 271-291 (VVLG…ALSQ), 297-317 (LLGY…IALQ), 326-346 (VGVY…VVSL), 373-393 (AAVM…LGFI), 408-430 (WWLV…RVAV), and 455-475 (IVVL…QPLI).

This sequence belongs to the complex I subunit 2 family. In terms of assembly, NDH-1 is composed of 13 different subunits. Subunits NuoA, H, J, K, L, M, N constitute the membrane sector of the complex.

The protein resides in the cell inner membrane. The catalysed reaction is a quinone + NADH + 5 H(+)(in) = a quinol + NAD(+) + 4 H(+)(out). Functionally, NDH-1 shuttles electrons from NADH, via FMN and iron-sulfur (Fe-S) centers, to quinones in the respiratory chain. The immediate electron acceptor for the enzyme in this species is believed to be ubiquinone. Couples the redox reaction to proton translocation (for every two electrons transferred, four hydrogen ions are translocated across the cytoplasmic membrane), and thus conserves the redox energy in a proton gradient. The polypeptide is NADH-quinone oxidoreductase subunit N (Salmonella paratyphi C (strain RKS4594)).